The chain runs to 257 residues: ADP-dependent (S)-NAD(P)H-hydrate dehydratase (257 aa).

The 257-residue stretch at Met-1–Arg-257 folds into the YjeF C-terminal domain. Position 200 (Gly-200) interacts with AMP. Asp-201 serves as a coordination point for (6S)-NADPHX.

Belongs to the NnrD/CARKD family. In terms of assembly, homotetramer. Mg(2+) serves as cofactor.

It catalyses the reaction (6S)-NADHX + ADP = AMP + phosphate + NADH + H(+). The enzyme catalyses (6S)-NADPHX + ADP = AMP + phosphate + NADPH + H(+). Functionally, catalyzes the dehydration of the S-form of NAD(P)HX at the expense of ADP, which is converted to AMP. Together with NAD(P)HX epimerase, which catalyzes the epimerization of the S- and R-forms, the enzyme allows the repair of both epimers of NAD(P)HX, a damaged form of NAD(P)H that is a result of enzymatic or heat-dependent hydration. The sequence is that of ADP-dependent (S)-NAD(P)H-hydrate dehydratase from Haloterrigena turkmenica (strain ATCC 51198 / DSM 5511 / JCM 9101 / NCIMB 13204 / VKM B-1734 / 4k) (Halococcus turkmenicus).